Reading from the N-terminus, the 85-residue chain is Small ribosomal subunit protein bS18 (85 aa).

It belongs to the bacterial ribosomal protein bS18 family. Part of the 30S ribosomal subunit. Forms a tight heterodimer with protein bS6.

Functionally, binds as a heterodimer with protein bS6 to the central domain of the 16S rRNA, where it helps stabilize the platform of the 30S subunit. The chain is Small ribosomal subunit protein bS18 from Hamiltonella defensa subsp. Acyrthosiphon pisum (strain 5AT).